Consider the following 606-residue polypeptide: MACPF domain-containing protein At4g24290 (606 aa).

In terms of domain architecture, MACPF spans 1-332 (MALRLPASKA…PPIEELHQFL (332 aa)).

Belongs to the complement C6/C7/C8/C9 (TC 1.C.39) family.

Functionally, negatively controls the salicylic acid (SA)-mediated pathway of programmed cell death in plant immunity. The polypeptide is MACPF domain-containing protein At4g24290 (Arabidopsis thaliana (Mouse-ear cress)).